The sequence spans 635 residues: MVKNLVLWVVVAVIMMTAYQSFNSSSVENSTDYTTFVYDVSNGQVTAARFDANEITVTKTDGSKYSTVMPPLEDKKLLDDLLSKKVKVEGTPFERRGFLSQILISWFPMLFLVGVWVFFMRQMQGGGGKAMSFGKSRAKMLNQDQIKVTFADVAGCDEAKEEVGEIVDFLRDPNKFQNLGGKIPKGILMVGPPGTGKTLLARAIAGEAKVPFFTISGSDFVEMFVGVGASRVRDMFEQAKKNAPCLIFIDEIDAVGRQRGAGLGGGHDEREQTLNQMLVEMDGFSGNDGVIVIAATNRPDVLDPALTRPGRFDRQVVVGLPDVKGREQILKVHMRKVSVAQDVDAMTLARGTPGYSGADLANLVNEAALFAARVNKRTVTMLEFEKAKDKINMGPERRTMIMTDKQKESTAYHEAGHAIVGYLVPEHDPVHKVTIIPRGRALGVTFFLPEGDQISISQKQLESKLSTLYAGRLAEDLIYGEENISTGASNDIKVATNIARNMVTQWGFSEKLGPILYTEDEGEVFLGRSMAKAKHMSDETAHSIDEEVRAIVNRNYARAREILIDNMDILHAMKDALVKYETIEEEQIKQLMNREPVTPPSGWGEPKTQQAAYANSTTNDTKPESAVENTDDFNV.

Topologically, residues 1–4 (MVKN) are cytoplasmic. A helical transmembrane segment spans residues 5 to 25 (LVLWVVVAVIMMTAYQSFNSS). Topologically, residues 26–97 (SVENSTDYTT…VEGTPFERRG (72 aa)) are periplasmic. Residues 98–118 (FLSQILISWFPMLFLVGVWVF) form a helical membrane-spanning segment. Residues 119 to 635 (FMRQMQGGGG…AVENTDDFNV (517 aa)) lie on the Cytoplasmic side of the membrane. 191-198 (GPPGTGKT) contacts ATP. A Zn(2+)-binding site is contributed by His413. The active site involves Glu414. Residues His417 and Asp491 each contribute to the Zn(2+) site. The tract at residues 593 to 635 (NREPVTPPSGWGEPKTQQAAYANSTTNDTKPESAVENTDDFNV) is disordered. Positions 607–620 (KTQQAAYANSTTND) are enriched in polar residues.

It in the central section; belongs to the AAA ATPase family. This sequence in the C-terminal section; belongs to the peptidase M41 family. As to quaternary structure, homohexamer. Requires Zn(2+) as cofactor.

It is found in the cell inner membrane. In terms of biological role, acts as a processive, ATP-dependent zinc metallopeptidase for both cytoplasmic and membrane proteins. Plays a role in the quality control of integral membrane proteins. This chain is ATP-dependent zinc metalloprotease FtsH, found in Haemophilus influenzae (strain ATCC 51907 / DSM 11121 / KW20 / Rd).